A 345-amino-acid chain; its full sequence is NADH-quinone oxidoreductase subunit H (345 aa).

8 helical membrane-spanning segments follow: residues 13-33 (VLIIAQCLAVLGFVMVSLLFL), 84-104 (FMLAPMTSFVLAMIAWAVIPF), 115-135 (VAILYVFAVSSLEVYGVIMGG), 161-181 (IGLIIIGVILSTGSMNFSAIV), 190-210 (FFSWYWLPHLPMVFLFFISAL), 248-268 (YIAIFLMCALITLLFFGGWLS), 278-298 (IWMVGKMAFFFFLFAMVKAIV), and 309-329 (LGWKVFLPFSLAWVVFVAFAA).

It belongs to the complex I subunit 1 family. As to quaternary structure, NDH-1 is composed of 14 different subunits. Subunits NuoA, H, J, K, L, M, N constitute the membrane sector of the complex.

It localises to the cell inner membrane. The catalysed reaction is a quinone + NADH + 5 H(+)(in) = a quinol + NAD(+) + 4 H(+)(out). In terms of biological role, NDH-1 shuttles electrons from NADH, via FMN and iron-sulfur (Fe-S) centers, to quinones in the respiratory chain. The immediate electron acceptor for the enzyme in this species is believed to be ubiquinone. Couples the redox reaction to proton translocation (for every two electrons transferred, four hydrogen ions are translocated across the cytoplasmic membrane), and thus conserves the redox energy in a proton gradient. This subunit may bind ubiquinone. The protein is NADH-quinone oxidoreductase subunit H of Dinoroseobacter shibae (strain DSM 16493 / NCIMB 14021 / DFL 12).